The primary structure comprises 406 residues: Probable 2,3-bisphosphoglycerate-independent phosphoglycerate mutase (406 aa).

It belongs to the BPG-independent phosphoglycerate mutase family. A-PGAM subfamily.

It carries out the reaction (2R)-2-phosphoglycerate = (2R)-3-phosphoglycerate. It functions in the pathway carbohydrate degradation; glycolysis; pyruvate from D-glyceraldehyde 3-phosphate: step 3/5. Catalyzes the interconversion of 2-phosphoglycerate and 3-phosphoglycerate. The polypeptide is Probable 2,3-bisphosphoglycerate-independent phosphoglycerate mutase (Thermus thermophilus (strain ATCC BAA-163 / DSM 7039 / HB27)).